We begin with the raw amino-acid sequence, 117 residues long: NADPH-dependent 7-cyano-7-deazaguanine reductase (117 aa).

Residue Cys31 is the Thioimide intermediate of the active site. Catalysis depends on Asp38, which acts as the Proton donor. Substrate-binding positions include 53 to 55 (IEL) and 72 to 73 (YE).

This sequence belongs to the GTP cyclohydrolase I family. QueF type 1 subfamily.

It localises to the cytoplasm. It catalyses the reaction 7-aminomethyl-7-carbaguanine + 2 NADP(+) = 7-cyano-7-deazaguanine + 2 NADPH + 3 H(+). Its pathway is tRNA modification; tRNA-queuosine biosynthesis. Catalyzes the NADPH-dependent reduction of 7-cyano-7-deazaguanine (preQ0) to 7-aminomethyl-7-deazaguanine (preQ1). The polypeptide is NADPH-dependent 7-cyano-7-deazaguanine reductase (Chlorobaculum tepidum (strain ATCC 49652 / DSM 12025 / NBRC 103806 / TLS) (Chlorobium tepidum)).